Here is a 331-residue protein sequence, read N- to C-terminus: Anthranilate phosphoribosyltransferase (331 aa).

Residues glycine 79, 82-83, threonine 87, 89-92, 107-115, and alanine 119 contribute to the 5-phospho-alpha-D-ribose 1-diphosphate site; these read GD, NIST, and KHGNYGATS. Glycine 79 provides a ligand contact to anthranilate. Serine 91 contributes to the Mg(2+) binding site. Residue asparagine 110 coordinates anthranilate. Arginine 165 provides a ligand contact to anthranilate. 2 residues coordinate Mg(2+): aspartate 223 and glutamate 224.

Belongs to the anthranilate phosphoribosyltransferase family. In terms of assembly, homodimer. Mg(2+) is required as a cofactor.

The enzyme catalyses N-(5-phospho-beta-D-ribosyl)anthranilate + diphosphate = 5-phospho-alpha-D-ribose 1-diphosphate + anthranilate. The protein operates within amino-acid biosynthesis; L-tryptophan biosynthesis; L-tryptophan from chorismate: step 2/5. In terms of biological role, catalyzes the transfer of the phosphoribosyl group of 5-phosphorylribose-1-pyrophosphate (PRPP) to anthranilate to yield N-(5'-phosphoribosyl)-anthranilate (PRA). The polypeptide is Anthranilate phosphoribosyltransferase (Phocaeicola vulgatus (strain ATCC 8482 / DSM 1447 / JCM 5826 / CCUG 4940 / NBRC 14291 / NCTC 11154) (Bacteroides vulgatus)).